The sequence spans 101 residues: Ferredoxin-3 (101 aa).

4Fe-4S ferredoxin-type domains follow at residues Y17–L46 and K70–L100. [4Fe-4S] cluster is bound by residues C26, C29, C32, C36, C80, C83, C86, and C90.

As to quaternary structure, homodimer. [4Fe-4S] cluster serves as cofactor.

Functionally, ferredoxins are iron-sulfur proteins that transfer electrons in a wide variety of metabolic reactions. The polypeptide is Ferredoxin-3 (fdxB) (Rhodobacter capsulatus (Rhodopseudomonas capsulata)).